Here is a 308-residue protein sequence, read N- to C-terminus: Acetaldehyde dehydrogenase 2 (308 aa).

Position 9–12 (9–12 (SGNI)) interacts with NAD(+). The Acyl-thioester intermediate role is filled by C127. NAD(+) contacts are provided by residues 158–166 (SAGPGTRAN) and N286.

It belongs to the acetaldehyde dehydrogenase family.

The enzyme catalyses acetaldehyde + NAD(+) + CoA = acetyl-CoA + NADH + H(+). The sequence is that of Acetaldehyde dehydrogenase 2 from Parafrankia sp. (strain EAN1pec).